Here is a 325-residue protein sequence, read N- to C-terminus: UDP-N-acetylglucosamine transporter ROCK1 (325 aa).

The Cytoplasmic portion of the chain corresponds to 1-13; it reads MATANGAKSPSSM. The helical transmembrane segment at 14-34 threads the bilayer; it reads GPKVLFYSILLTLQYGAQPLI. At 35–42 the chain is on the lumenal side; that stretch reads SKRCIRKD. Residues 43–63 traverse the membrane as a helical segment; sequence VIVTSSVLTCEIVKVICALIL. At 64–109 the chain is on the cytoplasmic side; it reads MARNGSLKGLAKEWTLMGSLTASGLPAAIYALQNSLLQISYRSLDS. A helical transmembrane segment spans residues 110–130; it reads LTFSILNQTKIFFTAFFTFII. Residues 131-135 lie on the Lumenal side of the membrane; it reads LRQKQ. The chain crosses the membrane as a helical span at residues 136 to 156; that stretch reads SILQIGALCLLIMAAVLLSVG. At 157–171 the chain is on the cytoplasmic side; the sequence is EGSNKDSSGINADQK. Residues 172 to 192 form a helical membrane-spanning segment; sequence LFYGIIPVLAASVLSGLASSL. Residues 193–203 are Lumenal-facing; that stretch reads CQWASQVKKHS. The chain crosses the membrane as a helical span at residues 204-224; it reads SYLMTVEMSIVGSLCLLVSTL. At 225 to 241 the chain is on the cytoplasmic side; that stretch reads KSPDGEAIKKYGFFHGW. Residues 242–262 form a helical membrane-spanning segment; it reads TALTLVPVISNALGGILVGLV. Residues 263–270 are Lumenal-facing; sequence TSHAGGVR. Residues 271–291 traverse the membrane as a helical segment; sequence KGFVIVSALLVTALLQFAFEG. Residues 292-325 lie on the Cytoplasmic side of the membrane; it reads KPPSSYCLVALPLVMSSISMYQKYPYIDKKKKKV.

It belongs to the nucleotide-sugar transporter family. CMP-Sialate:CMP antiporter (TC 2.A.7.12) subfamily. Expressed in roots, cotyledons, leaves, stems, flowers and siliques.

It localises to the endoplasmic reticulum membrane. Functionally, mediates the transport of UDP-linked acetylated hexosamines across the endoplasmic reticulum (ER) membrane. Facilitates UDP-N-acetylglucosamine (UDP-GlcNAc) and UDP-N-acetylgalactosamine (UDP-GalNAc) transport. Regulates the cytokinin signal in meristematic cells through modulating activity of cytokinin oxidases/dehydrogenases. Part of the ER quality control system, which determines the fate of aberrant proteins in the secretory pathway. This chain is UDP-N-acetylglucosamine transporter ROCK1, found in Arabidopsis thaliana (Mouse-ear cress).